A 318-amino-acid chain; its full sequence is Basic leucine zipper (bZIP) transcription factor atfB (318 aa).

The interval 114–157 is disordered; the sequence is FNSSPPEYAPPKHRSSLSEQSQTDGYGVSTRRRKASAIDQCEQQ. The interval 160-199 is basic motif; that stretch reads REKREKFLERNRLAASKCRQKKKEHTKLLETRFREVSNKK. In terms of domain architecture, bZIP spans 160–223; the sequence is REKREKFLER…LNLKNEMLRH (64 aa). Residues 202-216 form a leucine-zipper region; that stretch reads LESEIEHLRSEVLNL. Residues 275–301 are disordered; that stretch reads DGPMQLPSEMGSPLDQRRDSEQSIMTE.

The protein belongs to the bZIP family. ATF subfamily.

The protein localises to the nucleus. Transcription factor that acts as a key player in the regulatory circuit that integrates secondary metabolism and cellular response to oxidative stress. Regulates the genes involved in development and stress response through direct binding to their promoters. This Aspergillus flavus (strain ATCC 200026 / FGSC A1120 / IAM 13836 / NRRL 3357 / JCM 12722 / SRRC 167) protein is Basic leucine zipper (bZIP) transcription factor atfB.